A 367-amino-acid chain; its full sequence is C-C chemokine receptor type 9 (367 aa).

Residues 1–46 lie on the Extracellular side of the membrane; that stretch reads MVPTEATSLILNPSDDYGYDGTPPMEYDTNLTDYFCEKSHVRQFAG. An N-linked (GlcNAc...) asparagine glycan is attached at Asn30. 2 disulfides stabilise this stretch: Cys36–Cys287 and Cys117–Cys196. A helical transmembrane segment spans residues 47 to 72; it reads HFLPPLYWLVFIVGAVGNSLVILVYW. Residues 73-83 lie on the Cytoplasmic side of the membrane; sequence YCTRVKTMTDM. The helical transmembrane segment at 84–107 threads the bilayer; that stretch reads FLLNLAIADLLFLTTLPFWAIAAA. Residues 108–118 are Extracellular-facing; sequence DQWKFQTFMCK. The helical transmembrane segment at 119–148 threads the bilayer; it reads VVNSMYKMNFYSCVLLIMCISVDRYIAIAQ. Over 149–157 the chain is Cytoplasmic; that stretch reads AMRAQMWRQ. A helical membrane pass occupies residues 158 to 183; sequence KRLLYSKMVCFTIWVMAAALCLPELL. The Extracellular segment spans residues 184–206; the sequence is YSQVKEEHGTAICTVVYSSNEST. N-linked (GlcNAc...) asparagine glycosylation occurs at Asn203. Residues 207-241 form a helical membrane-spanning segment; it reads KLKSAVLTLKVTLGFFLPFVVMACCYAIIIHTLIR. Residues 242 to 246 are Cytoplasmic-facing; the sequence is AKKSS. The helical transmembrane segment at 247-281 threads the bilayer; the sequence is KHKALKVTITVLTVFVLSQFPHNCVLLVQTIDAYA. Residues 282 to 288 lie on the Extracellular side of the membrane; that stretch reads TFISSCA. A helical membrane pass occupies residues 289-319; that stretch reads LSIKIDICFQVTQTVAFFHSCLNPVLYVFVG. Topologically, residues 320 to 367 are cytoplasmic; it reads ERFRRDLVKTLKNLGCISQAQWVSFTRREGSLKLSSMLLETTSGALSF.

It belongs to the G-protein coupled receptor 1 family.

Its subcellular location is the cell membrane. Receptor for chemokine SCYA25/TECK. Subsequently transduces a signal by increasing the intracellular calcium ions level. This is C-C chemokine receptor type 9 (CCR9) from Ovis aries (Sheep).